Here is a 54-residue protein sequence, read N- to C-terminus: ATP synthase F(0) complex subunit 8 (54 aa).

The helical transmembrane segment at 8–24 (PWFSIMLLTWFTFSLLI) threads the bilayer.

This sequence belongs to the ATPase protein 8 family. Component of the ATP synthase complex composed at least of ATP5F1A/subunit alpha, ATP5F1B/subunit beta, ATP5MC1/subunit c (homooctomer), MT-ATP6/subunit a, MT-ATP8/subunit 8, ATP5ME/subunit e, ATP5MF/subunit f, ATP5MG/subunit g, ATP5MK/subunit k, ATP5MJ/subunit j, ATP5F1C/subunit gamma, ATP5F1D/subunit delta, ATP5F1E/subunit epsilon, ATP5PF/subunit F6, ATP5PB/subunit b, ATP5PD/subunit d, ATP5PO/subunit OSCP. ATP synthase complex consists of a soluble F(1) head domain (subunits alpha(3) and beta(3)) - the catalytic core - and a membrane F(0) domain - the membrane proton channel (subunits c, a, 8, e, f, g, k and j). These two domains are linked by a central stalk (subunits gamma, delta, and epsilon) rotating inside the F1 region and a stationary peripheral stalk (subunits F6, b, d, and OSCP).

Its subcellular location is the mitochondrion membrane. In terms of biological role, subunit 8, of the mitochondrial membrane ATP synthase complex (F(1)F(0) ATP synthase or Complex V) that produces ATP from ADP in the presence of a proton gradient across the membrane which is generated by electron transport complexes of the respiratory chain. ATP synthase complex consist of a soluble F(1) head domain - the catalytic core - and a membrane F(1) domain - the membrane proton channel. These two domains are linked by a central stalk rotating inside the F(1) region and a stationary peripheral stalk. During catalysis, ATP synthesis in the catalytic domain of F(1) is coupled via a rotary mechanism of the central stalk subunits to proton translocation. In vivo, can only synthesize ATP although its ATP hydrolase activity can be activated artificially in vitro. Part of the complex F(0) domain. This chain is ATP synthase F(0) complex subunit 8, found in Gallus gallus (Chicken).